The sequence spans 134 residues: Small ribosomal subunit protein uS9 (134 aa).

Residues 109 to 134 form a disordered region; sequence DARRTEPHKPSKSSKGPRAKRQKSYR. The segment covering 118 to 134 has biased composition (basic residues); the sequence is PSKSSKGPRAKRQKSYR.

It belongs to the universal ribosomal protein uS9 family.

The sequence is that of Small ribosomal subunit protein uS9 from Methanococcus maripaludis (strain C7 / ATCC BAA-1331).